Consider the following 304-residue polypeptide: UDP-N-acetylenolpyruvoylglucosamine reductase (304 aa).

The FAD-binding PCMH-type domain maps to 33–198 (IGGPADLLVM…LEVVLALQEG (166 aa)). R177 is a catalytic residue. Residue S227 is the Proton donor of the active site. E297 is a catalytic residue.

It belongs to the MurB family. It depends on FAD as a cofactor.

It localises to the cytoplasm. The catalysed reaction is UDP-N-acetyl-alpha-D-muramate + NADP(+) = UDP-N-acetyl-3-O-(1-carboxyvinyl)-alpha-D-glucosamine + NADPH + H(+). Its pathway is cell wall biogenesis; peptidoglycan biosynthesis. Functionally, cell wall formation. In Alkaliphilus metalliredigens (strain QYMF), this protein is UDP-N-acetylenolpyruvoylglucosamine reductase.